The primary structure comprises 945 residues: Leucine--tRNA ligase (945 aa).

A 'HIGH' region motif is present at residues 66–77; it reads PYPSGTGLHVGH. Positions 716 to 720 match the 'KMSKS' region motif; that stretch reads KMGKS. Lys-719 serves as a coordination point for ATP.

It belongs to the class-I aminoacyl-tRNA synthetase family.

The protein localises to the cytoplasm. It carries out the reaction tRNA(Leu) + L-leucine + ATP = L-leucyl-tRNA(Leu) + AMP + diphosphate. In Rhodococcus jostii (strain RHA1), this protein is Leucine--tRNA ligase.